Consider the following 331-residue polypeptide: Leucine-rich repeat-containing protein 26 (331 aa).

A signal peptide spans 1–26; that stretch reads MRGSFFSRLPPQLSLLLLLSLRRVWT. Residues 27–261 are Extracellular-facing; the sequence is QEDIGTAPSK…QCTQSLAARD (235 aa). The LRRNT domain occupies 34-71; it reads PSKSPVAPECPEACSCSLGGKANCSALALPAVPADLSW. 2 disulfide bridges follow: cysteine 43-cysteine 49 and cysteine 47-cysteine 57. LRR repeat units follow at residues 72–93, 96–117, 120–141, 144–165, and 168–191; these read QVRS…AFAN, ALLY…AFWG, VLQW…TFAP, ALSF…ILGP, and LLRV…NNLP. Positions 201–255 constitute an LRRCT domain; it reads NPWTCNCALRPLCTWLRKHPRPASETETLLCVSPRLQTLSLLTAFPDAAFKQCTQ. Cystine bridges form between cysteine 205–cysteine 231 and cysteine 207–cysteine 253. The helical transmembrane segment at 262–282 threads the bilayer; sequence LAVVYALGPVSFLASLAICLA. Residues 283–331 are Cytoplasmic-facing; sequence LGSVLTACGARRRRRRRTTVRHLLRRQLDPEGPPSLEDAGSPVTAAIQA. The tract at residues 310–331 is disordered; the sequence is LDPEGPPSLEDAGSPVTAAIQA.

In terms of assembly, interacts with KCNMA1.

The protein resides in the cell membrane. The protein localises to the cytoplasm. Its subcellular location is the cytoskeleton. Auxiliary protein of the large-conductance, voltage and calcium-activated potassium channel (BK alpha). Required for the conversion of BK alpha channels from a high-voltage to a low-voltage activated channel type in non-excitable cells. These are characterized by negative membrane voltages and constant low levels of calcium. The polypeptide is Leucine-rich repeat-containing protein 26 (Lrrc26) (Mus musculus (Mouse)).